Reading from the N-terminus, the 668-residue chain is Chitin synthase 8 (668 aa).

Polar residues predominate over residues methionine 1–glutamine 26. The segment at methionine 1 to leucine 62 is disordered. N-linked (GlcNAc...) asparagine glycans are attached at residues asparagine 21, asparagine 98, and asparagine 101. The next 2 helical transmembrane spans lie at tryptophan 136–tyrosine 156 and phenylalanine 162–isoleucine 182. N-linked (GlcNAc...) asparagine glycosylation is found at asparagine 216 and asparagine 476. Transmembrane regions (helical) follow at residues tryptophan 522–isoleucine 542, leucine 548–leucine 568, valine 583–phenylalanine 603, and tyrosine 615–valine 635.

It belongs to the chitin synthase family. Class VIII subfamily.

Its subcellular location is the cell membrane. It localises to the cell septum. The enzyme catalyses [(1-&gt;4)-N-acetyl-beta-D-glucosaminyl](n) + UDP-N-acetyl-alpha-D-glucosamine = [(1-&gt;4)-N-acetyl-beta-D-glucosaminyl](n+1) + UDP + H(+). In terms of biological role, polymerizes chitin, a structural polymer of the cell wall and septum, by transferring the sugar moiety of UDP-GlcNAc to the non-reducing end of the growing chitin polymer. Participated in the development of cell wall and plays a critical role in fungal response to environmental stresses. Necessary for pathogenicity and deoxinivalenol (DON) production. The sequence is that of Chitin synthase 8 from Gibberella zeae (strain ATCC MYA-4620 / CBS 123657 / FGSC 9075 / NRRL 31084 / PH-1) (Wheat head blight fungus).